The primary structure comprises 291 residues: MALAALMIALGSLGLHTWQAQAVPILPLGLAPDTFDDTYVGCAEEMEEKAAPLLKEEMAHHALLRESWEAAQETWEDKRRGLTLPPGFKAQNGIAIMVYTNSSNTLYWELNQAVRTGGGSRELYMRHFPFKALHFYLIRALQLLRGSGGCSRGPGEVVFRGVGSLRFEPKRLGDSVRLGQFASSSLDKAVAHRFGNATLFSLTTCFGAPIQAFSVFPKEREVLIPPHEVFLVTRFSQDGAQSLVTLWSYNQTCSHFNCAYLGGEKRRGCVSAPGALGTGDLHMTKRHLQQP.

A signal peptide spans 1 to 22 (MALAALMIALGSLGLHTWQAQA). C42 and C258 are joined by a disulfide. Positions 62–252 (ALLRESWEAA…LVTLWSYNQT (191 aa)) constitute a TR mART core domain. Y99 lines the NAD(+) pocket. The N-linked (GlcNAc...) asparagine glycan is linked to N101. Residues R160 and Q180 each coordinate NAD(+). R160 is a catalytic residue. S183 is a catalytic residue. N196 is a glycosylation site (N-linked (GlcNAc...) asparagine). Residue S214 coordinates NAD(+). E221 is an active-site residue. N250 carries an N-linked (GlcNAc...) asparagine glycan.

It belongs to the Arg-specific ADP-ribosyltransferase family.

The protein localises to the secreted. The enzyme catalyses L-arginyl-[protein] + NAD(+) = N(omega)-(ADP-D-ribosyl)-L-arginyl-[protein] + nicotinamide + H(+). This is Ecto-ADP-ribosyltransferase 5 (ART5) from Homo sapiens (Human).